The following is a 209-amino-acid chain: Response regulator protein VraR (209 aa).

The 117-residue stretch at 4 to 120 (KVLFVDDHEM…DIAEAIRKTY (117 aa)) folds into the Response regulatory domain. Aspartate 55 bears the 4-aspartylphosphate mark. Residues 141–206 (RAELYEMLTE…QAVIYAFQHN (66 aa)) enclose the HTH luxR-type domain. The segment at residues 165–184 (NQEIASASHITIKTVKTHVS) is a DNA-binding region (H-T-H motif).

Post-translationally, phosphorylated by VraS.

Its subcellular location is the cytoplasm. Its function is as follows. Member of the two-component regulatory system VraS/VraR involved in the control of the cell wall peptidoglycan biosynthesis. The sequence is that of Response regulator protein VraR (vraR) from Staphylococcus saprophyticus subsp. saprophyticus (strain ATCC 15305 / DSM 20229 / NCIMB 8711 / NCTC 7292 / S-41).